The chain runs to 476 residues: POC1 centriolar protein homolog B (476 aa).

WD repeat units follow at residues 16-55 (GHKA…RAYR), 58-97 (GHKD…KSSE), 100-139 (AHTA…FLYS), 142-181 (RHTH…CVNN), 183-223 (SDSV…LLQH), 226-265 (VHSC…LIYT), and 268-307 (GHTG…LHCK). Residues 429–468 (ALEHIMEQLNILTQTVSILEQRLSLTEDKLRDCLENQQKL) are a coiled coil.

The protein belongs to the WD repeat POC1 family. In terms of assembly, interacts with POC1A. Interacts with FAM161A. Interacts with CEP44; the interaction is direct and recruits POC1B to centriolar microtubules. Forms a microtubule-associated complex with POC5, CETN2 and FAM161A. Interacts with CCDC15. In terms of processing, phosphorylated in mitotic cells that may be mediated by CDK1. As to expression, expressed in the retina.

It is found in the cytoplasm. It localises to the cytoskeleton. The protein localises to the microtubule organizing center. Its subcellular location is the centrosome. The protein resides in the centriole. It is found in the cilium basal body. It localises to the spindle pole. Its function is as follows. Plays an important role in centriole assembly and/or stability and ciliogenesis. Involved in early steps of centriole duplication, as well as in the later steps of centriole length control. Acts in concert with POC1A to ensure centriole integrity and proper mitotic spindle formation. Required for primary cilia formation, ciliary length and also cell proliferation. Required for retinal integrity. Acts as a positive regulator of centriole elongation. In Mus musculus (Mouse), this protein is POC1 centriolar protein homolog B (Poc1b).